A 334-amino-acid chain; its full sequence is Ketol-acid reductoisomerase (NADP(+)) (334 aa).

Residues 1–181 enclose the KARI N-terminal Rossmann domain; sequence MTTVYYDQSV…GATRAGVLET (181 aa). NADP(+) contacts are provided by residues 25–28, R48, S52, and 82–85; these read YGSQ and DEIQ. H107 is an active-site residue. Position 133 (G133) interacts with NADP(+). The KARI C-terminal knotted domain occupies 182-327; sequence SFKEETETDL…RELRDMMPFI (146 aa). 4 residues coordinate Mg(2+): D190, E194, E226, and E230. A substrate-binding site is contributed by S251.

The protein belongs to the ketol-acid reductoisomerase family. Mg(2+) serves as cofactor.

The enzyme catalyses (2R)-2,3-dihydroxy-3-methylbutanoate + NADP(+) = (2S)-2-acetolactate + NADPH + H(+). It carries out the reaction (2R,3R)-2,3-dihydroxy-3-methylpentanoate + NADP(+) = (S)-2-ethyl-2-hydroxy-3-oxobutanoate + NADPH + H(+). It functions in the pathway amino-acid biosynthesis; L-isoleucine biosynthesis; L-isoleucine from 2-oxobutanoate: step 2/4. The protein operates within amino-acid biosynthesis; L-valine biosynthesis; L-valine from pyruvate: step 2/4. Involved in the biosynthesis of branched-chain amino acids (BCAA). Catalyzes an alkyl-migration followed by a ketol-acid reduction of (S)-2-acetolactate (S2AL) to yield (R)-2,3-dihydroxy-isovalerate. In the isomerase reaction, S2AL is rearranged via a Mg-dependent methyl migration to produce 3-hydroxy-3-methyl-2-ketobutyrate (HMKB). In the reductase reaction, this 2-ketoacid undergoes a metal-dependent reduction by NADPH to yield (R)-2,3-dihydroxy-isovalerate. In Staphylococcus saprophyticus subsp. saprophyticus (strain ATCC 15305 / DSM 20229 / NCIMB 8711 / NCTC 7292 / S-41), this protein is Ketol-acid reductoisomerase (NADP(+)).